Here is a 349-residue protein sequence, read N- to C-terminus: GTPase Obg (349 aa).

The 159-residue stretch at 1 to 159 (MKFLDQAKVY…LWIWLRLKLI (159 aa)) folds into the Obg domain. The OBG-type G domain maps to 160–327 (ADAGLIGLPN…VLRALMRVVQ (168 aa)). GTP-binding positions include 166 to 173 (GLPNAGKS), 191 to 195 (FTTLH), 212 to 215 (DIPG), 279 to 282 (SQID), and 308 to 310 (SSA). The Mg(2+) site is built by Ser173 and Thr193.

Belongs to the TRAFAC class OBG-HflX-like GTPase superfamily. OBG GTPase family. As to quaternary structure, monomer. Mg(2+) serves as cofactor.

The protein resides in the cytoplasm. An essential GTPase which binds GTP, GDP and possibly (p)ppGpp with moderate affinity, with high nucleotide exchange rates and a fairly low GTP hydrolysis rate. Plays a role in control of the cell cycle, stress response, ribosome biogenesis and in those bacteria that undergo differentiation, in morphogenesis control. The sequence is that of GTPase Obg from Chelativorans sp. (strain BNC1).